Reading from the N-terminus, the 456-residue chain is Cell adhesion molecule 1 (456 aa).

Residues 1-47 (MASAVLPSGSQCAAAAAVAAAAAPPGLRLRLLLLLLSAAALIPTGDG) form the signal peptide. The 95-residue stretch at 48-142 (QNLFTKDVTV…PPQESYTTIT (95 aa)) folds into the Ig-like V-type domain. Residues 48 to 388 (QNLFTKDVTV…EEGTIGAVDH (341 aa)) are Extracellular-facing. C67 and C127 are joined by a disulfide. Residues N70, N104, N116, and N168 are each glycosylated (N-linked (GlcNAc...) asparagine). Ig-like C2-type domains follow at residues 147–241 (PRNL…RYLE) and 246–332 (PQVH…YMLY). 2 disulfide bridges follow: C169–C223 and C270–C316. N-linked (GlcNAc...) asparagine glycans are attached at residues N307 and N311. A helical transmembrane segment spans residues 389-409 (AVIGGVVAVVVFAMLCLLIIL). Residues 410-456 (GRYFARHKGTYFTHEAKGADDAADADTAIINAEGGQNNSEEKKEYFI) lie on the Cytoplasmic side of the membrane. Position 436 is a phosphothreonine (T436). The residue at position 448 (S448) is a Phosphoserine.

The protein belongs to the nectin family. Homodimer (via Ig-like V-type domain). Interacts with FARP1. Interacts (via Ig-like V-type domain) with CRTAM (via Ig-like V-type domain); the interaction competes with CRTAM homodimerization and CADM1 homodimerization. Interacts (via C-terminus) with EPB41L3/DAL1. The interaction with EPB41L3/DAL1 may act to anchor CADM1 to the actin cytoskeleton. Interacts (via C-terminus) with MPP2 (via PDZ domain). Interacts (via C-terminus) with MPP3 (via PDZ domain); this interaction connects CADM1 with DLG1. Interacts (via C-terminus) with PALS2 (via PDZ domain). Post-translationally, N-glycosylated. In terms of processing, glycosylation at Asn-70 and Asn-104 promotes adhesive binding and synapse induction. In terms of tissue distribution, expressed dominantly in epithelial cells but not expressed in fibroblast cells (at protein level). Expressed in the T-cell area of lymph nodes, specifically in CD8+ and CD4- CD8- dendritic cells (at protein level). Expressed in CD8+ dendritic cells in the spleen (at protein level). Expressed in CD103+ dendritic cells in the small intestine lamina propria and mesenteric lymph nodes (at protein level). Expressed in brain, lung, kidney, testis, heart, spleen and liver, but not expressed in skeletal muscle.

Its subcellular location is the cell membrane. The protein localises to the synaptic cell membrane. Mediates homophilic cell-cell adhesion in a Ca(2+)-independent manner. Also mediates heterophilic cell-cell adhesion with CADM3 and NECTIN3 in a Ca(2+)-independent manner. Interaction with CRTAM promotes natural killer (NK) cell cytotoxicity and interferon-gamma (IFN-gamma) secretion by CD8+ T-cells in vitro as well as NK cell-mediated rejection of tumors expressing CADM1 in vivo. In mast cells, may mediate attachment to and promote communication with nerves. CADM1, together with MITF, is essential for development and survival of mast cells in vivo. By interacting with CRTAM and thus promoting the adhesion between CD8+ T-cells and CD8+ dendritic cells, regulates the retention of activated CD8+ T-cell within the draining lymph node. Required for the intestinal retention of intraepithelial CD4+ CD8+ T-cells and, to a lesser extent, intraepithelial and lamina propria CD8+ T-cells and CD4+ T-cells. Interaction with CRTAM promotes the adhesion to gut-associated CD103+ dendritic cells, which may facilitate the expression of gut-homing and adhesion molecules on T-cells and the conversion of CD4+ T-cells into CD4+ CD8+ T-cells. Acts as a synaptic cell adhesion molecule and plays a role in the formation of dendritic spines and in synapse assembly. May be involved in neuronal migration, axon growth, pathfinding, and fasciculation on the axons of differentiating neurons. May play diverse roles in the spermatogenesis including in the adhesion of spermatocytes and spermatids to Sertoli cells and for their normal differentiation into mature spermatozoa. The chain is Cell adhesion molecule 1 from Mus musculus (Mouse).